A 67-amino-acid polypeptide reads, in one-letter code: Probable tautomerase bsl7456 (67 aa).

The Proton acceptor; via imino nitrogen role is filled by Pro2.

This sequence belongs to the 4-oxalocrotonate tautomerase family.

This is Probable tautomerase bsl7456 from Bradyrhizobium diazoefficiens (strain JCM 10833 / BCRC 13528 / IAM 13628 / NBRC 14792 / USDA 110).